Reading from the N-terminus, the 112-residue chain is Transmembrane protein 14C (112 aa).

Helical transmembrane passes span 7 to 27 (VVPL…GGII), 32 to 52 (AGSV…SLGA), 62 to 82 (VWVF…RFYH), and 86 to 106 (FMPA…VGVS).

It belongs to the TMEM14 family.

It is found in the mitochondrion membrane. Its function is as follows. Required for normal heme biosynthesis. The protein is Transmembrane protein 14C (TMEM14C) of Pongo abelii (Sumatran orangutan).